The primary structure comprises 624 residues: Ceramide transfer protein (624 aa).

Over residues 1–11 (MSDNQSWNSSG) the composition is skewed to polar residues. The tract at residues 1–24 (MSDNQSWNSSGSEEDPETESGPPV) is disordered. The PH domain occupies 23–117 (PVERCGVLSK…WIDAIEQHKT (95 aa)). Position 126 is a phosphoserine (S126). S132 bears the Phosphoserine; by PKD mark. The residue at position 135 (S135) is a Phosphoserine. The stretch at 263 to 303 (IELMVKREDSWQKRLDKETEKKRRTEEAYKNAMTELKKKSH) forms a coiled coil. A Phosphoserine modification is found at S315. Residues 321 to 327 (EFFDAVE) carry the FFAT motif. The residue at position 372 (Y372) is a Phosphotyrosine. Phosphoserine is present on residues S373, S377, and S380. The 230-residue stretch at 389-618 (DVHRFSSQVE…FTSYVQEKTA (230 aa)) folds into the START domain. E472, Q493, N530, and Y579 together coordinate an N-acylsphing-4-enine.

As to quaternary structure, interacts with VAPA and VAPB. Interaction with VAPB is less efficient than with VAPA. Interacts (via FFAT motif) with the MOSPD2 (via MSP domain). Post-translationally, phosphorylation on Ser-132 decreases the affinity toward phosphatidylinositol 4-phosphate at Golgi membranes and reduces ceramide transfer activity. Inactivated by hyperphosphorylation of serine residues by CSNK1G2/CK1 that triggers dissociation from the Golgi complex, thus down-regulating ER-to-Golgi transport of ceramide and sphingomyelin synthesis.

It is found in the cytoplasm. The protein resides in the golgi apparatus. The protein localises to the endoplasmic reticulum. The catalysed reaction is N-hexadecanoylsphing-4-enine(in) = N-hexadecanoylsphing-4-enine(out). In terms of biological role, shelters ceramides and diacylglycerol lipids inside its START domain and mediates the intracellular trafficking of ceramides and diacylglycerol lipids in a non-vesicular manner. The chain is Ceramide transfer protein (CERT1) from Pongo abelii (Sumatran orangutan).